The sequence spans 201 residues: Probable nicotinate-nucleotide adenylyltransferase (201 aa).

The protein belongs to the NadD family.

The enzyme catalyses nicotinate beta-D-ribonucleotide + ATP + H(+) = deamido-NAD(+) + diphosphate. It participates in cofactor biosynthesis; NAD(+) biosynthesis; deamido-NAD(+) from nicotinate D-ribonucleotide: step 1/1. In terms of biological role, catalyzes the reversible adenylation of nicotinate mononucleotide (NaMN) to nicotinic acid adenine dinucleotide (NaAD). The chain is Probable nicotinate-nucleotide adenylyltransferase from Clostridium botulinum (strain Langeland / NCTC 10281 / Type F).